A 323-amino-acid chain; its full sequence is MPSITTAKREYEERLVDCLTKYSCVLFVGMDNVRSQQVHDVGRALRAKAEFMMGKKTLQGKIVEKRAQAKDASPEAKHFNDQCEEYNLLSGNTGLIFTNNAVQEITSVLDAHRVKRAARVGAISPCDVIVAAGSTGMEPTQTSFFQALNIATKIAKGMVEIVTEKKVLSVGDKVDNSTATLLQKLNISPFYYQVNVLSVWDRGVLFTREDLMMTEDMVEKMLMEGLSNVAAMALGAGIPTSSTIGPMLVDAFKNLLAVSVATSYEFEEHNGKELREAAINGLLAGSCSAAAEPAAAAPAAPSAAAKEEPEESDEDDFGMGGLF.

The tract at residues 296–323 (AAPAAPSAAAKEEPEESDEDDFGMGGLF) is disordered. A compositionally biased stretch (acidic residues) spans 308–317 (EPEESDEDDF).

The protein belongs to the universal ribosomal protein uL10 family. As to quaternary structure, P0 forms a pentameric complex by interaction with dimers of P1 and P2. Phosphorylated.

Ribosomal protein P0 is the functional equivalent of E.coli protein L10. In Leishmania infantum, this protein is Large ribosomal subunit protein uL10 (LIPO-A).